Reading from the N-terminus, the 149-residue chain is Calmodulin (149 aa).

N-acetylalanine is present on alanine 2. 4 EF-hand domains span residues 8–43, 44–79, 81–116, and 117–149; these read EQIAEFKEAFSLFDKDGDGTITTKELGTVMRSLGQN, PTEAELQDMINEVDTDGNGTIDFPEFLTMMARKMKE, DSEEEIREAFRVFDKDGNGFISAAELRHVMTNLGEK, and LTDEEVDEMIREADTDGDGQVNYEEFVGMMTSK. Ca(2+) is bound by residues aspartate 21, aspartate 23, aspartate 25, threonine 27, glutamate 32, aspartate 57, aspartate 59, asparagine 61, threonine 63, glutamate 68, aspartate 94, aspartate 96, asparagine 98, and glutamate 105. Position 116 is an N6,N6,N6-trimethyllysine (lysine 116). Ca(2+)-binding residues include aspartate 130, aspartate 132, aspartate 134, glutamine 136, and glutamate 141.

Belongs to the calmodulin family.

Functionally, calmodulin mediates the control of a large number of enzymes, ion channels and other proteins by Ca(2+). Among the enzymes to be stimulated by the calmodulin-Ca(2+) complex are a number of protein kinases and phosphatases. The sequence is that of Calmodulin from Suberites domuncula (Sponge).